A 681-amino-acid polypeptide reads, in one-letter code: Transmembrane protein 214-A (681 aa).

2 disordered regions span residues M1 to P41 and K58 to Q99. N300 and N324 each carry an N-linked (GlcNAc...) asparagine glycan. Transmembrane regions (helical) follow at residues G471 to Y491 and L608 to V628.

It belongs to the TMEM214 family. As to quaternary structure, constitutively interacts with CASP4; required for the localization of procaspase 4 to the ER.

The protein resides in the endoplasmic reticulum membrane. Functionally, critical mediator, in cooperation with CASP4, of endoplasmic reticulum-stress induced apoptosis. Required or the activation of CASP4 following endoplasmic reticulum stress. The sequence is that of Transmembrane protein 214-A (tmem214-a) from Xenopus laevis (African clawed frog).